Reading from the N-terminus, the 627-residue chain is Bromodomain adjacent to zinc finger domain protein 1A (627 aa).

The PHD-type zinc-finger motif lies at 222–272 (NARCKVCRKKGDGESMVLCDGCDRGHHIYCVRPKLKYVPEGDWFCPECHPK). The tract at residues 270–503 (HPKQRSHRLP…NRRSSGRHHG (234 aa)) is disordered. Residues 272-283 (KQRSHRLPSRHR) are compositionally biased toward basic residues. The stretch at 281-327 (RHRYSMDSDEEEEEELDQKEEEEEEEEQEELSESENEQEDEMSEEES) forms a coiled coil. Residues 287–326 (DSDEEEEEELDQKEEEEEEEEQEELSESENEQEDEMSEEE) are compositionally biased toward acidic residues. Low complexity predominate over residues 348–359 (TGKLGPKPKTGK). 2 stretches are compositionally biased toward polar residues: residues 386-395 (EPTSRLSASD) and 402-412 (SPNSSLVNVVT). Basic residues predominate over residues 417–431 (GRGKGKGRGRGRGRL). Positions 486–496 (DISSLEQGNRR) are enriched in polar residues. The Bromo domain maps to 502-605 (HGVHELSACE…SFFITEAQNL (104 aa)).

The protein belongs to the WAL family. As to quaternary structure, together with p18 and p20 proteins, it forms the Xenopus version of CHRAC. Post-translationally, phosphorylated in mitosis.

The protein localises to the nucleus. Functionally, regulatory subunit of a chromatin remodeling complex, which forms ordered nucleosome arrays on chromatin and slides edge- and center-positioned histone octamers away from their original location on the DNA template to facilitate access to DNA during DNA-templated processes such as DNA replication, transcription, and repair. Involved in regulating the spacing of nucleosomes along the chromatin and have the ability to slide mononucleosomes to the center of a DNA template in an ATP-dependent manner. May play a role in transcriptional regulation. This chain is Bromodomain adjacent to zinc finger domain protein 1A (baz1a), found in Xenopus laevis (African clawed frog).